A 117-amino-acid chain; its full sequence is Fluoride-specific ion channel FluC 2 (117 aa).

2 helical membrane passes run 1–21 (MISI…RSAI) and 46–66 (FLIG…AFFV). Residues Gly71 and Thr74 each contribute to the Na(+) site. The helical transmembrane segment at 95-115 (LFLNYSLLQFIIGFIACYIGY) threads the bilayer.

It belongs to the fluoride channel Fluc/FEX (TC 1.A.43) family.

It is found in the cell membrane. The catalysed reaction is fluoride(in) = fluoride(out). Na(+) is not transported, but it plays an essential structural role and its presence is essential for fluoride channel function. Fluoride-specific ion channel. Important for reducing fluoride concentration in the cell, thus reducing its toxicity. The sequence is that of Fluoride-specific ion channel FluC 2 from Staphylococcus aureus (strain NCTC 8325 / PS 47).